Reading from the N-terminus, the 288-residue chain is MSLDKFKIAMQYAMPKHFISRVVGKLAAAKAGVLTTTLIKLFIKQYKVDMSEAKHPDPAHYESFNEFFTRPLKDGARPIVADSDIIIHPVDGAISQLGDIVDGQLIQAKGHDYSLQALLGGNKDDTTPFLGGKFATIYLAPKDYHRIHMPIDGTLSKMIYVPGDLFSVNPLTAQNVPNLFARNERVVAIFETEIGPLAMVLVGATIVASIETIWAGTVTPPAGSDVFSWNYPTKGENAISLKKGEEMGRFKLGSTVVLAWGDDKADILDDQLPETVTRLGTPFAKIDD.

Catalysis depends on charge relay system; for autoendoproteolytic cleavage activity residues aspartate 91, histidine 148, and serine 254. Catalysis depends on serine 254, which acts as the Schiff-base intermediate with substrate; via pyruvic acid; for decarboxylase activity. Serine 254 is subject to Pyruvic acid (Ser); by autocatalysis.

It belongs to the phosphatidylserine decarboxylase family. PSD-B subfamily. Prokaryotic type I sub-subfamily. In terms of assembly, heterodimer of a large membrane-associated beta subunit and a small pyruvoyl-containing alpha subunit. Pyruvate is required as a cofactor. Is synthesized initially as an inactive proenzyme. Formation of the active enzyme involves a self-maturation process in which the active site pyruvoyl group is generated from an internal serine residue via an autocatalytic post-translational modification. Two non-identical subunits are generated from the proenzyme in this reaction, and the pyruvate is formed at the N-terminus of the alpha chain, which is derived from the carboxyl end of the proenzyme. The autoendoproteolytic cleavage occurs by a canonical serine protease mechanism, in which the side chain hydroxyl group of the serine supplies its oxygen atom to form the C-terminus of the beta chain, while the remainder of the serine residue undergoes an oxidative deamination to produce ammonia and the pyruvoyl prosthetic group on the alpha chain. During this reaction, the Ser that is part of the protease active site of the proenzyme becomes the pyruvoyl prosthetic group, which constitutes an essential element of the active site of the mature decarboxylase.

It localises to the cell membrane. The catalysed reaction is a 1,2-diacyl-sn-glycero-3-phospho-L-serine + H(+) = a 1,2-diacyl-sn-glycero-3-phosphoethanolamine + CO2. It functions in the pathway phospholipid metabolism; phosphatidylethanolamine biosynthesis; phosphatidylethanolamine from CDP-diacylglycerol: step 2/2. In terms of biological role, catalyzes the formation of phosphatidylethanolamine (PtdEtn) from phosphatidylserine (PtdSer). The protein is Phosphatidylserine decarboxylase proenzyme of Pseudoalteromonas translucida (strain TAC 125).